The chain runs to 344 residues: Cell cycle control protein 50C (344 aa).

Residues 1-34 (MEETPQHCLSRLPDNSALKQQELPAHRLYFTARR) are Cytoplasmic-facing. A helical membrane pass occupies residues 35 to 55 (VLFVFFTTGIFCLCMGIILIL). At 56-306 (SARSTQEIEI…STLTWCGGNS (251 aa)) the chain is on the extracellular side. Asn-66 and Asn-261 each carry an N-linked (GlcNAc...) asparagine glycan. The chain crosses the membrane as a helical span at residues 307–327 (LFLGLAYTVTGAITWLASFTM). Topologically, residues 328-344 (MAIHITLKNKQMSFFHQ) are cytoplasmic.

This sequence belongs to the CDC50/LEM3 family. Specifically expressed in testis.

It localises to the membrane. This chain is Cell cycle control protein 50C (TMEM30C), found in Macaca fascicularis (Crab-eating macaque).